The sequence spans 292 residues: Mitochondrial ornithine transporter 1 (292 aa).

Solcar repeat units follow at residues 11–97, 105–196, and 211–292; these read EGAI…CSKF, SPLG…VKKS, and SKIW…LSAL. The next 6 helical transmembrane spans lie at 14–34, 69–89, 104–124, 171–187, 213–233, and 267–287; these read ILDI…EFPF, FFQG…TLFV, VSPL…ASLV, GQSG…VAWF, IWEL…SIFP, and GLGI…YIFE.

Belongs to the mitochondrial carrier (TC 2.A.29) family.

It is found in the mitochondrion inner membrane. In terms of biological role, required for arginine biosynthesis. Transports ornithine synthesized from glutamate in the mitochondrial matrix to the cytosol, where it is converted to arginine. This is Mitochondrial ornithine transporter 1 (ORT1) from Saccharomyces cerevisiae (strain ATCC 204508 / S288c) (Baker's yeast).